The following is a 320-amino-acid chain: Glutathione synthetase (320 aa).

In terms of domain architecture, ATP-grasp spans 133-317; it reads KMYTLQFAAV…LGEKVICWLE (185 aa). 159-215 provides a ligand contact to ATP; it reads LEEHGAAVLKPLGGKAGEGILFLDPGDRNFNSLVEISTQHGKEPVMVQRFLPEAKEG. Mg(2+) is bound by residues Glu288 and Asn290.

The protein belongs to the prokaryotic GSH synthase family. The cofactor is Mg(2+). It depends on Mn(2+) as a cofactor.

It catalyses the reaction gamma-L-glutamyl-L-cysteine + glycine + ATP = glutathione + ADP + phosphate + H(+). It participates in sulfur metabolism; glutathione biosynthesis; glutathione from L-cysteine and L-glutamate: step 2/2. This is Glutathione synthetase from Synechocystis sp. (strain ATCC 27184 / PCC 6803 / Kazusa).